Here is a 46-residue protein sequence, read N- to C-terminus: IRTHTLPCKCPICGKAFSRPWLLQGHTTHHTGEKPFSCQHCNRAFA.

3 C2H2-type zinc fingers span residues 1–4 (IRTH), 8–30 (CKCP…TTHH), and 36–46 (FSCQHCNRAFA).

The protein belongs to the snail C2H2-type zinc-finger protein family.

It localises to the nucleus. The chain is Escargot/snail protein homolog from Oryzias latipes (Japanese rice fish).